The primary structure comprises 376 residues: Queuine tRNA-ribosyltransferase (376 aa).

Catalysis depends on Asp89, which acts as the Proton acceptor. Substrate contacts are provided by residues 89–93 (DSGGF), Asp143, Gln194, and Gly221. The interval 252-258 (GVGIPSN) is RNA binding. The active-site Nucleophile is the Asp271. The RNA binding; important for wobble base 34 recognition stretch occupies residues 276–280 (ARNGR). Cys309, Cys311, Cys314, and His340 together coordinate Zn(2+).

It belongs to the queuine tRNA-ribosyltransferase family. Homodimer. Within each dimer, one monomer is responsible for RNA recognition and catalysis, while the other monomer binds to the replacement base PreQ1. Requires Zn(2+) as cofactor.

The enzyme catalyses 7-aminomethyl-7-carbaguanine + guanosine(34) in tRNA = 7-aminomethyl-7-carbaguanosine(34) in tRNA + guanine. The protein operates within tRNA modification; tRNA-queuosine biosynthesis. Its function is as follows. Catalyzes the base-exchange of a guanine (G) residue with the queuine precursor 7-aminomethyl-7-deazaguanine (PreQ1) at position 34 (anticodon wobble position) in tRNAs with GU(N) anticodons (tRNA-Asp, -Asn, -His and -Tyr). Catalysis occurs through a double-displacement mechanism. The nucleophile active site attacks the C1' of nucleotide 34 to detach the guanine base from the RNA, forming a covalent enzyme-RNA intermediate. The proton acceptor active site deprotonates the incoming PreQ1, allowing a nucleophilic attack on the C1' of the ribose to form the product. After dissociation, two additional enzymatic reactions on the tRNA convert PreQ1 to queuine (Q), resulting in the hypermodified nucleoside queuosine (7-(((4,5-cis-dihydroxy-2-cyclopenten-1-yl)amino)methyl)-7-deazaguanosine). The polypeptide is Queuine tRNA-ribosyltransferase (Clostridium botulinum (strain Hall / ATCC 3502 / NCTC 13319 / Type A)).